The primary structure comprises 1040 residues: Multidrug resistance protein MdtB (1040 aa).

The next 12 helical transmembrane spans lie at 16 to 36 (FILR…AGII), 347 to 367 (LMLA…NIPA), 369 to 389 (IIPA…MVFL), 396 to 416 (LTLM…IVVI), 440 to 460 (IGFT…PLLF), 472 to 492 (FAVT…TLTP), 537 to 557 (WLTL…WIFI), 863 to 883 (LGST…VLGV), 888 to 908 (FIHP…ALLA), 911 to 931 (IAGA…IGIV), 968 to 988 (ILMT…STGV), and 998 to 1018 (IGMV…TPVI).

The protein belongs to the resistance-nodulation-cell division (RND) (TC 2.A.6) family. MdtB subfamily. Part of a tripartite efflux system composed of MdtA, MdtB and MdtC. MdtB forms a heteromultimer with MdtC.

The protein localises to the cell inner membrane. The protein is Multidrug resistance protein MdtB of Cronobacter sakazakii (strain ATCC BAA-894) (Enterobacter sakazakii).